A 749-amino-acid polypeptide reads, in one-letter code: Catalase-peroxidase 2 (749 aa).

The signal sequence occupies residues 1–27; the sequence is MFKRTIPLFAAFTLAISPSIFPNYAHA. The segment at residues 107 to 229 is a cross-link (tryptophyl-tyrosyl-methioninium (Trp-Tyr) (with M-255)); sequence WHAAGTYRIY…LAATVMGLIY (123 aa). Catalysis depends on histidine 108, which acts as the Proton acceptor. The tryptophyl-tyrosyl-methioninium (Tyr-Met) (with W-107) cross-link spans 229–255; the sequence is YVNPEGPNGVPDPLAAAEKIRETFGRM. Position 270 (histidine 270) interacts with heme b.

Belongs to the peroxidase family. Peroxidase/catalase subfamily. As to quaternary structure, homodimer or homotetramer. It depends on heme b as a cofactor. In terms of processing, formation of the three residue Trp-Tyr-Met cross-link is important for the catalase, but not the peroxidase activity of the enzyme.

It catalyses the reaction H2O2 + AH2 = A + 2 H2O. The catalysed reaction is 2 H2O2 = O2 + 2 H2O. Bifunctional enzyme with both catalase and broad-spectrum peroxidase activity. The protein is Catalase-peroxidase 2 of Legionella pneumophila (strain Lens).